The primary structure comprises 550 residues: Acetyl-coenzyme A transporter 1 (550 aa).

Basic and acidic residues-rich tracts occupy residues 1-12 (MSPTISHKDSSR) and 36-52 (DDSR…REVL). Positions 1–58 (MSPTISHKDSSRQRRSGMFSHALDMKSGPLPPGGWDDSRRDSVGGEGDREVLLGDAGP) are disordered. Residues 1 to 74 (MSPTISHKDS…PRSYRSELSS (74 aa)) lie on the Cytoplasmic side of the membrane. Phosphoserine is present on Ser42. Residues 75–95 (ILLLLFLYVLQGIPLGLAGSI) form a helical membrane-spanning segment. At 96 to 113 (PLILQSKNVSYTDQAFFS) the chain is on the extracellular side. Asn103 carries an N-linked (GlcNAc...) asparagine glycan. Residues 114–134 (FVFWPFSLKLLWAPLVDAVYF) form a helical membrane-spanning segment. Over 135–141 (KNFGRRK) the chain is Cytoplasmic. Residues 142–162 (SWLVPTQYTLGIFMIYLSTQV) form a helical membrane-spanning segment. Residues 163-175 (DRLLGNIDGRTPD) lie on the Extracellular side of the membrane. The chain crosses the membrane as a helical span at residues 176–196 (VVALTVTFFLFEFLAATQDIA). Topologically, residues 197-217 (VDGWALTMLSRENVGYASTCN) are cytoplasmic. The helical transmembrane segment at 218–238 (SVGQTAGYFLGNVLFLALESA) threads the bilayer. Topologically, residues 239 to 256 (DFCNKYLRFQPQPRGIVT) are extracellular. Residues 257–277 (LSDFLFFWGTVFLITTTLVAL) traverse the membrane as a helical segment. The Cytoplasmic segment spans residues 278–300 (LKKENREASIVKEETQGITDTYK). Residues 301 to 321 (LLFSIIKMPAVLAFCLLILTS) form a helical membrane-spanning segment. The Extracellular segment spans residues 322-344 (KIGFSAADAVTGLKLVEEGVPKE). Residues 345-365 (HLALLAVPMVPLQIILPLLIS) traverse the membrane as a helical segment. The Cytoplasmic segment spans residues 366-375 (KYTAGPQPLN). Residues 376–396 (IFYKAMPYRLLLGLEYALLVW) traverse the membrane as a helical segment. Residues 397-405 (WTPKVEHQG) are Extracellular-facing. The helical transmembrane segment at 406-426 (GFPLYYYIIVLLSYALHQVTL) threads the bilayer. Residues 427-509 (YSMYVSIMAF…LGGSCVTALD (83 aa)) lie on the Cytoplasmic side of the membrane. Residues 510–530 (GYYVESIICVLIGFGWWFFLG) form a helical membrane-spanning segment. The Extracellular segment spans residues 531 to 550 (PKFKKLQDEGPSSWKCKRNN).

The protein belongs to the SLC33A transporter family. In terms of assembly, homodimerizes. Expressed in all adult tissues examined including brain, heart, kidney, liver and spleen, with maximum expression in liver and kidney.

It localises to the endoplasmic reticulum membrane. It carries out the reaction acetyl-CoA(in) = acetyl-CoA(out). Functionally, acetyl-CoA transporter that mediates active acetyl-CoA import through the endoplasmic reticulum (ER) membrane into the ER lumen where specific ER-based acetyl-CoA:lysine acetyltransferases are responsible for the acetylation of ER-based protein substrate, such as BACE1. Necessary for O-acetylation of gangliosides. This is Acetyl-coenzyme A transporter 1 (Slc33a1) from Mus musculus (Mouse).